We begin with the raw amino-acid sequence, 189 residues long: Protein GrpE (189 aa).

A compositionally biased stretch (basic and acidic residues) spans 1–14; that stretch reads MTEKNEEVVEDKNI. Residues 1–38 are disordered; it reads MTEKNEEVVEDKNISDQTDENLTEEIESEADDLQVEPD. Residues 17–35 show a composition bias toward acidic residues; that stretch reads QTDENLTEEIESEADDLQV.

It belongs to the GrpE family. Homodimer.

It is found in the cytoplasm. In terms of biological role, participates actively in the response to hyperosmotic and heat shock by preventing the aggregation of stress-denatured proteins, in association with DnaK and GrpE. It is the nucleotide exchange factor for DnaK and may function as a thermosensor. Unfolded proteins bind initially to DnaJ; upon interaction with the DnaJ-bound protein, DnaK hydrolyzes its bound ATP, resulting in the formation of a stable complex. GrpE releases ADP from DnaK; ATP binding to DnaK triggers the release of the substrate protein, thus completing the reaction cycle. Several rounds of ATP-dependent interactions between DnaJ, DnaK and GrpE are required for fully efficient folding. The chain is Protein GrpE from Leuconostoc mesenteroides subsp. mesenteroides (strain ATCC 8293 / DSM 20343 / BCRC 11652 / CCM 1803 / JCM 6124 / NCDO 523 / NBRC 100496 / NCIMB 8023 / NCTC 12954 / NRRL B-1118 / 37Y).